We begin with the raw amino-acid sequence, 345 residues long: Beta-2-glycoprotein 1 (345 aa).

The N-terminal stretch at 1–19 (MISPVLILFSSFLCHVAIA) is a signal peptide. Sushi domains follow at residues 21–81 (RTCP…KCTP), 82–139 (RVCP…VCAP), 140–202 (ITCP…ECRE), and 203–262 (VKCP…SCKA). 11 disulfide bridges follow: C23-C66, C51-C79, C84-C124, C110-C137, C142-C188, C174-C200, C205-C248, C234-C260, C264-C315, C300-C325, and C307-C345. O-linked (GalNAc...) threonine glycosylation occurs at T33. The O-linked (GalNAc...) threonine glycan is linked to T149. 3 N-linked (GlcNAc...) asparagine glycosylation sites follow: N162, N183, and N193. N253 is a glycosylation site (N-linked (GlcNAc...) asparagine). A sushi-like region spans residues 263-345 (SCKVPVKKAT…KTDASDVKPC (83 aa)).

Expressed by the liver and secreted in plasma.

The protein localises to the secreted. Its function is as follows. Binds to various kinds of negatively charged substances such as heparin, phospholipids, and dextran sulfate. May prevent activation of the intrinsic blood coagulation cascade by binding to phospholipids on the surface of damaged cells. The chain is Beta-2-glycoprotein 1 (APOH) from Pan troglodytes (Chimpanzee).